Here is a 312-residue protein sequence, read N- to C-terminus: Phosphoribosylglycinamide formyltransferase, chloroplastic (312 aa).

The N-terminal 73 residues, 1-73 (MEAQQIISRF…EVCSSSWRIW (73 aa)), are a transit peptide targeting the chloroplast. 109 to 111 (GSN) is a binding site for N(1)-(5-phospho-beta-D-ribosyl)glycinamide. (6R)-10-formyltetrahydrofolate contacts are provided by residues Lys162, 187–190 (LKLI), and Asn204. The active-site Proton donor is the His206. Asp247 contacts (6R)-10-formyltetrahydrofolate. Glu276 contributes to the N(1)-(5-phospho-beta-D-ribosyl)glycinamide binding site.

This sequence belongs to the GART family.

The protein resides in the plastid. It is found in the chloroplast. The catalysed reaction is N(1)-(5-phospho-beta-D-ribosyl)glycinamide + (6R)-10-formyltetrahydrofolate = N(2)-formyl-N(1)-(5-phospho-beta-D-ribosyl)glycinamide + (6S)-5,6,7,8-tetrahydrofolate + H(+). It participates in purine metabolism; IMP biosynthesis via de novo pathway; N(2)-formyl-N(1)-(5-phospho-D-ribosyl)glycinamide from N(1)-(5-phospho-D-ribosyl)glycinamide (10-formyl THF route): step 1/1. This chain is Phosphoribosylglycinamide formyltransferase, chloroplastic (PUR3), found in Vigna unguiculata (Cowpea).